The following is a 150-amino-acid chain: Ribosome maturation factor RimP (150 aa).

It belongs to the RimP family.

The protein resides in the cytoplasm. Required for maturation of 30S ribosomal subunits. The polypeptide is Ribosome maturation factor RimP (Yersinia pestis bv. Antiqua (strain Antiqua)).